Here is a 264-residue protein sequence, read N- to C-terminus: MNKVKVGIVGCLGRQGRHLVSEISASDIAEVSAGLVRIGSEYVGKVLGVVIGCNCDAKITDSLEHLFDVSDVVIEFTNPNTMIECMKMAELKKKPMVSGTTGISEDMVFQDYIKSVPFLWSANLSFSMNILLKLVEDATRMLSGYDVEIWEIHHRYKKDSPSGTSLMLGKAAARGMNVQFRMNQYIKGGQESRQDNKSIGYAVSRGGVGLSDHKIIFAGDEDVIEFSHRATNKNVYAKGALKAALWLIGQPCGIYTMSDMMVTQ.

Residue 10 to 15 (GCLGRQ) participates in NAD(+) binding. Arg-37 contacts NADP(+). NAD(+)-binding positions include 99–101 (GTT) and 121–124 (SANL). The active-site Proton donor/acceptor is His-153. His-154 contributes to the (S)-2,3,4,5-tetrahydrodipicolinate binding site. The Proton donor role is filled by Lys-157. (S)-2,3,4,5-tetrahydrodipicolinate is bound at residue 163–164 (GT).

It belongs to the DapB family.

It localises to the cytoplasm. It carries out the reaction (S)-2,3,4,5-tetrahydrodipicolinate + NAD(+) + H2O = (2S,4S)-4-hydroxy-2,3,4,5-tetrahydrodipicolinate + NADH + H(+). The enzyme catalyses (S)-2,3,4,5-tetrahydrodipicolinate + NADP(+) + H2O = (2S,4S)-4-hydroxy-2,3,4,5-tetrahydrodipicolinate + NADPH + H(+). Its pathway is amino-acid biosynthesis; L-lysine biosynthesis via DAP pathway; (S)-tetrahydrodipicolinate from L-aspartate: step 4/4. Functionally, catalyzes the conversion of 4-hydroxy-tetrahydrodipicolinate (HTPA) to tetrahydrodipicolinate. The polypeptide is 4-hydroxy-tetrahydrodipicolinate reductase (Ehrlichia ruminantium (strain Gardel)).